The primary structure comprises 131 residues: GATA zinc finger domain-containing protein 2 (131 aa).

Residues 21-55 are compositionally biased toward low complexity; it reads STATDATSADGAASETDAASATDTTSATDPTSATD. A disordered region spans residues 21–85; the sequence is STATDATSAD…RGRPYISTPP (65 aa). The segment covering 57–74 has biased composition (polar residues); the sequence is IATTNTTGITSSGPTTNG. Residues 88–115 form a GATA-type zinc finger; that stretch reads CYDCGRTRSPYWRKGTYNGQVVHLCNAC.

This Dictyostelium discoideum (Social amoeba) protein is GATA zinc finger domain-containing protein 2 (comH).